Consider the following 88-residue polypeptide: Protein ORGAN SIZE RELATED 1 (88 aa).

The organ Size Related (OSR) domain stretch occupies residues 25 to 76; it reads ITARSVALLLFLSLLLLILPPFLPPLPPPPATLLLLPLLLMILLIFLAFSPS. 2 helical membrane passes run 30–50 and 53–73; these read VALLLFLSLLLLILPPFLPPL and PPATLLLLPLLLMILLIFLAF.

This sequence belongs to the plant organ size related (OSR) protein family. In terms of tissue distribution, mostly expressed in flowers, and, to a lower extent, in leaves and cotyledons.

Its subcellular location is the membrane. The protein resides in the endoplasmic reticulum. It localises to the nucleus. It is found in the cytoplasm. Together with ARGOS and ARL, regulates organ growth and final organ size. Promotes both cell expansion and proliferation-dependent organ growth, in an ANT-dependent manner. The sequence is that of Protein ORGAN SIZE RELATED 1 from Arabidopsis thaliana (Mouse-ear cress).